We begin with the raw amino-acid sequence, 1788 residues long: Laminin subunit beta-1 (1788 aa).

Positions 1–24 (MLELRLIVVIVLALLSWQWDPVDS) are cleaved as a signal peptide. The interval 23-43 (DSQRPPQHGRRDRPKYPPNKF) is disordered. One can recognise a Laminin N-terminal domain in the interval 50–287 (ERSSCYPATG…GISNMVVRGS (238 aa)). Residues N138, N201, and N232 are each glycosylated (N-linked (GlcNAc...) asparagine). Disulfide bonds link C288–C297, C290–C318, C320–C329, C332–C352, C355–C364, C357–C382, C385–C394, C397–C415, C418–C431, C420–C446, C448–C457, C460–C475, C478–C491, C480–C498, C500–C509, C512–C526, C529–C541, C531–C548, and C550–C559. 4 Laminin EGF-like domains span residues 288–354 (CSCY…ACKK), 355–417 (CECN…VCQP), 418–477 (CDCD…GCEP), and 478–528 (CTCN…GCSL). N-linked (GlcNAc...) asparagine glycosylation is present at N487. The Laminin EGF-like 5; truncated domain occupies 529-559 (CNCDAGGSYDNYCDVISGQCRCRPHMTGRSC). Positions 567 to 783 (FIPLLPEVHE…LDNILSVFVH (217 aa)) constitute a Laminin IV type B domain. N-linked (GlcNAc...) asparagine glycosylation is present at N591. A Cell attachment site motif is present at residues 641-643 (RGD). 32 disulfides stabilise this stretch: C789-C801, C791-C808, C810-C819, C822-C834, C837-C849, C839-C856, C858-C867, C870-C880, C883-C892, C885-C899, C902-C911, C914-C930, C933-C949, C935-C960, C962-C971, C974-C988, C991-C1005, C993-C1012, C1015-C1024, C1027-C1040, C1043-C1057, C1045-C1064, C1066-C1075, C1078-C1091, C1094-C1106, C1096-C1113, C1115-C1124, C1127-C1139, C1142-C1154, C1144-C1161, C1163-C1172, and C1175-C1186. Laminin EGF-like domains lie at 789–836 (CNCN…GCKA), 837–882 (CDCN…ECRV), 883–932 (CQCN…GCRP), 933–990 (CRCP…TCSK), 991–1042 (CECS…NCQQ), 1043–1093 (CECD…GCES), 1094–1141 (CNCD…KCQP), and 1142–1188 (CECD…HCSP). N1051 carries an N-linked (GlcNAc...) asparagine glycan. Residues 1189–1405 (CGECFNNWDL…SQIPELNNQV (217 aa)) form a domain II region. N1246, N1301, N1330, and N1341 each carry an N-linked (GlcNAc...) asparagine glycan. Positions 1255–1405 (EKLDYETQSL…SQIPELNNQV (151 aa)) form a coiled coil. The tract at residues 1406 to 1432 (CGKPGDPCDSLCGGAGCGHCGGFLSCE) is domain alpha. The tract at residues 1433 to 1788 (HGAKTHSEEA…RGSHYRQCYT (356 aa)) is domain I. Residues 1453–1505 (ITSKKDQADQTIRALTQAKLNASEAYEKAKRGFEQSERYLNQTNANIKLAENL) are a coiled coil. N1473, N1493, and N1515 each carry an N-linked (GlcNAc...) asparagine glycan. The stretch at 1540–1561 (EEIETLGDQINRAVSSLKNVEA) forms a coiled coil. N1581, N1644, and N1703 each carry an N-linked (GlcNAc...) asparagine glycan. Positions 1608-1762 (QGKAKDAIQQ…QQLLRLQAEI (155 aa)) form a coiled coil. Positions 1690 to 1719 (GEANNLQSATSATNQTLTDRASRSENARER) are disordered. Residues 1693–1708 (NNLQSATSATNQTLTD) show a composition bias toward polar residues. A compositionally biased stretch (basic and acidic residues) spans 1709–1719 (RASRSENARER).

As to quaternary structure, laminin is a complex glycoprotein, consisting of three different polypeptide chains (alpha, beta, gamma), which are bound to each other by disulfide bonds into a cross-shaped molecule comprising one long and three short arms with globules at each end. In terms of tissue distribution, found in the basement membranes (major component).

It is found in the secreted. The protein resides in the extracellular space. The protein localises to the extracellular matrix. It localises to the basement membrane. Its function is as follows. Binding to cells via a high affinity receptor, laminin is thought to mediate the attachment, migration and organization of cells into tissues during embryonic development by interacting with other extracellular matrix components. Required for Ndg localization to the basement membrane. In Drosophila melanogaster (Fruit fly), this protein is Laminin subunit beta-1 (LanB1).